The chain runs to 172 residues: UPF0102 protein Pcryo_2198 (172 aa).

This sequence belongs to the UPF0102 family.

In Psychrobacter cryohalolentis (strain ATCC BAA-1226 / DSM 17306 / VKM B-2378 / K5), this protein is UPF0102 protein Pcryo_2198.